Consider the following 624-residue polypeptide: MLSRVARYSRTLNQLTRTSQGGLLSAVLRTSIRQNSTDSPPSNSANEIYTKLSDTKDPQRNQFFQYTWGSWLTNDKSKKKQRETTFSIEGLTLFIDRINQLESKLGQPKSLEGAFVLTNNKELLGSTKEKVIVRSIASIHEGKHHRVYKITLNTGKDLVLRIPYKLDSDAAIASKLKSEVATIDFLKLKLGLNVPRVLAYGVDSNNELKSPFILQEFISGELLMKKWHPLLPDSEETNKNLHEVIDPIAQFQDKILSVTFKKFGSLYFHDDVEGSLQNDVPYEGETDSTLSNRWRIGPSVERQFTRNKSKLQQSIIDQYNGPWDASNTTALLESVADIELENAKSKLALINADAGANENDKVLITKQIKTFENLKKISPQLINDKSKSIMNVQELFKPRLYIPDLDPLNVIQHTESENYFIDFEGSTIKPFILTSYPKFVAYQGAKIYNLEEDVPGYKEMEELEKQQYDFMYYKTRNERMWELELNKYRHDLIAVASPHIKVLKSPYLQALDIKNGKDYLYVEGSIVQLQAMWEAYVANELVNSKDTKFPIEYTAEYLDQHQQELSDYQLETVSSPFSATGGWIPQDMFDTLKAQGILVETKDGDYKVETEKVLENPPSPSEEK.

A mitochondrion-targeting transit peptide spans 1–34 (MLSRVARYSRTLNQLTRTSQGGLLSAVLRTSIRQ).

This sequence belongs to the AIM9 family.

The protein localises to the mitochondrion. This chain is Altered inheritance of mitochondria protein 9, mitochondrial (AIM9), found in Candida dubliniensis (strain CD36 / ATCC MYA-646 / CBS 7987 / NCPF 3949 / NRRL Y-17841) (Yeast).